A 669-amino-acid chain; its full sequence is DNA mismatch repair protein MutL (669 aa).

The interval 357 to 379 (EQRQNTENNQEKTFSSEESNSKS) is disordered. Residues 361-379 (NTENNQEKTFSSEESNSKS) are compositionally biased toward polar residues.

It belongs to the DNA mismatch repair MutL/HexB family.

In terms of biological role, this protein is involved in the repair of mismatches in DNA. It is required for dam-dependent methyl-directed DNA mismatch repair. May act as a 'molecular matchmaker', a protein that promotes the formation of a stable complex between two or more DNA-binding proteins in an ATP-dependent manner without itself being part of a final effector complex. The sequence is that of DNA mismatch repair protein MutL from Staphylococcus aureus (strain Mu3 / ATCC 700698).